Here is an 87-residue protein sequence, read N- to C-terminus: NAD(P)H-quinone oxidoreductase subunit O (87 aa).

Residues 1-10 are compositionally biased toward basic and acidic residues; sequence MSEQTGKVDD. A disordered region spans residues 1–23; the sequence is MSEQTGKVDDSQSPPKVQKKLRK.

Belongs to the complex I NdhO subunit family. As to quaternary structure, NDH-1 can be composed of about 15 different subunits; different subcomplexes with different compositions have been identified which probably have different functions.

The protein localises to the cellular thylakoid membrane. It carries out the reaction a plastoquinone + NADH + (n+1) H(+)(in) = a plastoquinol + NAD(+) + n H(+)(out). It catalyses the reaction a plastoquinone + NADPH + (n+1) H(+)(in) = a plastoquinol + NADP(+) + n H(+)(out). Its function is as follows. NDH-1 shuttles electrons from an unknown electron donor, via FMN and iron-sulfur (Fe-S) centers, to quinones in the respiratory and/or the photosynthetic chain. The immediate electron acceptor for the enzyme in this species is believed to be plastoquinone. Couples the redox reaction to proton translocation, and thus conserves the redox energy in a proton gradient. Cyanobacterial NDH-1 also plays a role in inorganic carbon-concentration. This chain is NAD(P)H-quinone oxidoreductase subunit O, found in Prochlorococcus marinus (strain NATL2A).